The sequence spans 488 residues: Glutamyl-tRNA(Gln) amidotransferase subunit A (488 aa).

Catalysis depends on charge relay system residues Lys77 and Ser152. The active-site Acyl-ester intermediate is Ser176.

The protein belongs to the amidase family. GatA subfamily. As to quaternary structure, heterotrimer of A, B and C subunits.

The enzyme catalyses L-glutamyl-tRNA(Gln) + L-glutamine + ATP + H2O = L-glutaminyl-tRNA(Gln) + L-glutamate + ADP + phosphate + H(+). Functionally, allows the formation of correctly charged Gln-tRNA(Gln) through the transamidation of misacylated Glu-tRNA(Gln) in organisms which lack glutaminyl-tRNA synthetase. The reaction takes place in the presence of glutamine and ATP through an activated gamma-phospho-Glu-tRNA(Gln). The chain is Glutamyl-tRNA(Gln) amidotransferase subunit A from Streptococcus pyogenes serotype M49 (strain NZ131).